Here is a 147-residue protein sequence, read N- to C-terminus: UPF0306 protein YhbP (147 aa).

Belongs to the UPF0306 family.

This is UPF0306 protein YhbP from Salmonella paratyphi A (strain AKU_12601).